The sequence spans 391 residues: Elongation factor Tu (391 aa).

In terms of domain architecture, tr-type G spans 10–201; that stretch reads KPHVNIGTIG…AVDDYIPTPE (192 aa). The segment at 19 to 26 is G1; the sequence is GHVDHGKT. Residue 19–26 coordinates GTP; sequence GHVDHGKT. Threonine 26 contacts Mg(2+). The segment at 55 to 59 is G2; sequence GITIS. Positions 76–79 are G3; it reads DCPG. GTP-binding positions include 76–80 and 131–134; these read DCPGH and NKCD. A G4 region spans residues 131-134; the sequence is NKCD. The interval 169–171 is G5; sequence SAL.

It belongs to the TRAFAC class translation factor GTPase superfamily. Classic translation factor GTPase family. EF-Tu/EF-1A subfamily. Monomer.

It is found in the cytoplasm. The enzyme catalyses GTP + H2O = GDP + phosphate + H(+). Its function is as follows. GTP hydrolase that promotes the GTP-dependent binding of aminoacyl-tRNA to the A-site of ribosomes during protein biosynthesis. The chain is Elongation factor Tu from Brucella anthropi (strain ATCC 49188 / DSM 6882 / CCUG 24695 / JCM 21032 / LMG 3331 / NBRC 15819 / NCTC 12168 / Alc 37) (Ochrobactrum anthropi).